The primary structure comprises 505 residues: Histidine ammonia-lyase (505 aa).

A cross-link (5-imidazolinone (Ala-Gly)) is located at residues 144–146; the sequence is ASG. Ser145 is modified (2,3-didehydroalanine (Ser)).

It belongs to the PAL/histidase family. Contains an active site 4-methylidene-imidazol-5-one (MIO), which is formed autocatalytically by cyclization and dehydration of residues Ala-Ser-Gly.

It is found in the cytoplasm. It catalyses the reaction L-histidine = trans-urocanate + NH4(+). It participates in amino-acid degradation; L-histidine degradation into L-glutamate; N-formimidoyl-L-glutamate from L-histidine: step 1/3. In Legionella pneumophila (strain Corby), this protein is Histidine ammonia-lyase.